Here is a 192-residue protein sequence, read N- to C-terminus: Peptidyl-tRNA hydrolase (192 aa).

Residue Tyr-18 coordinates tRNA. Residue His-23 is the Proton acceptor of the active site. 3 residues coordinate tRNA: Phe-69, Asn-71, and Asn-117.

The protein belongs to the PTH family. As to quaternary structure, monomer.

The protein localises to the cytoplasm. It carries out the reaction an N-acyl-L-alpha-aminoacyl-tRNA + H2O = an N-acyl-L-amino acid + a tRNA + H(+). In terms of biological role, hydrolyzes ribosome-free peptidyl-tRNAs (with 1 or more amino acids incorporated), which drop off the ribosome during protein synthesis, or as a result of ribosome stalling. Its function is as follows. Catalyzes the release of premature peptidyl moieties from peptidyl-tRNA molecules trapped in stalled 50S ribosomal subunits, and thus maintains levels of free tRNAs and 50S ribosomes. The sequence is that of Peptidyl-tRNA hydrolase from Neisseria gonorrhoeae (strain ATCC 700825 / FA 1090).